A 155-amino-acid polypeptide reads, in one-letter code: Large ribosomal subunit protein uL30 (155 aa).

Belongs to the universal ribosomal protein uL30 family. In terms of assembly, part of the 50S ribosomal subunit.

The sequence is that of Large ribosomal subunit protein uL30 from Pyrococcus abyssi (strain GE5 / Orsay).